The primary structure comprises 150 residues: UPF0178 protein Shewmr4_1560 (150 aa).

This sequence belongs to the UPF0178 family.

The protein is UPF0178 protein Shewmr4_1560 of Shewanella sp. (strain MR-4).